Here is a 149-residue protein sequence, read N- to C-terminus: Transcriptional repressor NrdR (149 aa).

The segment at 3–34 (CPFCSTEETKVIDSRLVSDGYQVRRRRECTKC) is a zinc-finger region. The 91-residue stretch at 49–139 (PKIIKNNGMR…VYLSFENINE (91 aa)) folds into the ATP-cone domain.

It belongs to the NrdR family. Zn(2+) serves as cofactor.

In terms of biological role, negatively regulates transcription of bacterial ribonucleotide reductase nrd genes and operons by binding to NrdR-boxes. This is Transcriptional repressor NrdR from Mannheimia succiniciproducens (strain KCTC 0769BP / MBEL55E).